Consider the following 304-residue polypeptide: Putative S-adenosyl-L-methionine-dependent methyltransferase MAP_3385 (304 aa).

Residues aspartate 129 and 158-159 (DL) each bind S-adenosyl-L-methionine.

Belongs to the UPF0677 family.

Exhibits S-adenosyl-L-methionine-dependent methyltransferase activity. The sequence is that of Putative S-adenosyl-L-methionine-dependent methyltransferase MAP_3385 from Mycolicibacterium paratuberculosis (strain ATCC BAA-968 / K-10) (Mycobacterium paratuberculosis).